The primary structure comprises 165 residues: Putative L,D-transpeptidase YkuD (165 aa).

In terms of domain architecture, LysM spans Leu2–Ile46. A L,D-TPase catalytic domain is found at Tyr57 to Thr164. His124 acts as the Proton donor/acceptor in catalysis. Cys140 serves as the catalytic Nucleophile.

This sequence belongs to the YkuD family. As to quaternary structure, monomer.

Its subcellular location is the spore wall. Its pathway is cell wall biogenesis; peptidoglycan biosynthesis. Probable enzyme that may play an important role in cell wall biology. The chain is Putative L,D-transpeptidase YkuD from Bacillus licheniformis (strain ATCC 14580 / DSM 13 / JCM 2505 / CCUG 7422 / NBRC 12200 / NCIMB 9375 / NCTC 10341 / NRRL NRS-1264 / Gibson 46).